Consider the following 639-residue polypeptide: Polypeptide N-acetylgalactosaminyltransferase 15 (639 aa).

Residues 1-11 lie on the Cytoplasmic side of the membrane; it reads MLLRKRYRHRP. The chain crosses the membrane as a helical; Signal-anchor for type II membrane protein span at residues 12-34; that stretch reads CRLQFLLLLLMLGCVLMMVAMLH. At 35–639 the chain is on the lumenal side; the sequence is PPHHTLHQTV…FDQINAVDER (605 aa). Residues 106 to 155 are disordered; that stretch reads RNQSQGRRGGSYRLIKQPRRQDKEAPKRDWGADEDGEVSEEEELTPFSLD. N-linked (GlcNAc...) asparagine glycosylation occurs at asparagine 107. The segment covering 124–136 has biased composition (basic and acidic residues); that stretch reads RRQDKEAPKRDWG. Residues 137 to 149 show a composition bias toward acidic residues; the sequence is ADEDGEVSEEEEL. 5 disulfide bridges follow: cysteine 181-cysteine 412, cysteine 403-cysteine 482, cysteine 517-cysteine 536, cysteine 562-cysteine 575, and cysteine 603-cysteine 620. Residues 190-299 form a catalytic subdomain A region; sequence LPTASVILCF…PGWLEPLLSR (110 aa). Positions 231 and 260 each coordinate substrate. Aspartate 283, histidine 285, and histidine 417 together coordinate Mn(2+). Positions 358-420 are catalytic subdomain B; the sequence is PIRSPVVPGE…PCSRVGHIYQ (63 aa). In terms of domain architecture, Ricin B-type lectin spans 504–631; sequence SFSGKLHNTG…GKARQQWRFD (128 aa). The N-linked (GlcNAc...) asparagine glycan is linked to asparagine 574.

It belongs to the glycosyltransferase 2 family. GalNAc-T subfamily. Mn(2+) is required as a cofactor. In terms of tissue distribution, widely expressed. Highly expressed in small intestine, placenta, spleen, cerebral cortex and ovary. Expressed at intermediate level in uterus, mammary gland, stomach, cerebellum and whole brain. Weakly expressed in fetal brain, bone marrow, thyroid gland, thymus, heart, skeletal muscle, lung, liver, colon, pancreas, kidney and testis. Not expressed in leukocyte. Expressed in both normal and osteoarthritic cartilage. Expressed at low level in chondrocytes in all zones of both normal and osteoarthritic cartilage.

It is found in the golgi apparatus membrane. The catalysed reaction is L-seryl-[protein] + UDP-N-acetyl-alpha-D-galactosamine = a 3-O-[N-acetyl-alpha-D-galactosaminyl]-L-seryl-[protein] + UDP + H(+). It carries out the reaction L-threonyl-[protein] + UDP-N-acetyl-alpha-D-galactosamine = a 3-O-[N-acetyl-alpha-D-galactosaminyl]-L-threonyl-[protein] + UDP + H(+). Its pathway is protein modification; protein glycosylation. Its function is as follows. Catalyzes the initial reaction in O-linked oligosaccharide biosynthesis, the transfer of an N-acetyl-D-galactosamine residue to a serine or threonine residue on the protein receptor. Although it displays a much weaker activity toward all substrates tested compared to GALNT2, it is able to transfer up to seven GalNAc residues to the Muc5AC peptide, suggesting that it can fill vicinal Thr/Ser residues in cooperation with other GALNT proteins. Prefers Muc1a as substrate. The chain is Polypeptide N-acetylgalactosaminyltransferase 15 (GALNT15) from Homo sapiens (Human).